A 270-amino-acid polypeptide reads, in one-letter code: Putative phosphoenolpyruvate synthase regulatory protein (270 aa).

151–158 contributes to the ADP binding site; sequence GVSRCGKT.

It belongs to the pyruvate, phosphate/water dikinase regulatory protein family. PSRP subfamily.

The catalysed reaction is [pyruvate, water dikinase] + ADP = [pyruvate, water dikinase]-phosphate + AMP + H(+). It catalyses the reaction [pyruvate, water dikinase]-phosphate + phosphate + H(+) = [pyruvate, water dikinase] + diphosphate. In terms of biological role, bifunctional serine/threonine kinase and phosphorylase involved in the regulation of the phosphoenolpyruvate synthase (PEPS) by catalyzing its phosphorylation/dephosphorylation. This chain is Putative phosphoenolpyruvate synthase regulatory protein, found in Methylobacillus flagellatus (strain ATCC 51484 / DSM 6875 / VKM B-1610 / KT).